Consider the following 337-residue polypeptide: ERI1 exoribonuclease 3 (337 aa).

Residues 146–320 (FLVLDFEATC…DDCKNIANIM (175 aa)) form the Exonuclease domain. Mg(2+) is bound by residues D150, E152, and D249. E152 acts as the Proton acceptor in catalysis. E152 contributes to the AMP binding site. H307 acts as the Proton acceptor in catalysis. Residue H307 coordinates AMP. Position 312 (D312) interacts with Mg(2+).

Interacts with PRNP. Mg(2+) is required as a cofactor. In terms of tissue distribution, highly expressed in the brain, heart, thyroid and testis. Expressed at low levels in the muscle cells, liver, pancreas and kidney.

This chain is ERI1 exoribonuclease 3 (Eri3), found in Mus musculus (Mouse).